The primary structure comprises 331 residues: Lipoyl synthase (331 aa).

[4Fe-4S] cluster-binding residues include C74, C79, C85, C100, C104, C107, and S314. The Radical SAM core domain maps to 85–303 (CFGKGTATFM…ETEAYKMGFT (219 aa)).

The protein belongs to the radical SAM superfamily. Lipoyl synthase family. It depends on [4Fe-4S] cluster as a cofactor.

The protein resides in the cytoplasm. The enzyme catalyses [[Fe-S] cluster scaffold protein carrying a second [4Fe-4S](2+) cluster] + N(6)-octanoyl-L-lysyl-[protein] + 2 oxidized [2Fe-2S]-[ferredoxin] + 2 S-adenosyl-L-methionine + 4 H(+) = [[Fe-S] cluster scaffold protein] + N(6)-[(R)-dihydrolipoyl]-L-lysyl-[protein] + 4 Fe(3+) + 2 hydrogen sulfide + 2 5'-deoxyadenosine + 2 L-methionine + 2 reduced [2Fe-2S]-[ferredoxin]. Its pathway is protein modification; protein lipoylation via endogenous pathway; protein N(6)-(lipoyl)lysine from octanoyl-[acyl-carrier-protein]: step 2/2. In terms of biological role, catalyzes the radical-mediated insertion of two sulfur atoms into the C-6 and C-8 positions of the octanoyl moiety bound to the lipoyl domains of lipoate-dependent enzymes, thereby converting the octanoylated domains into lipoylated derivatives. This is Lipoyl synthase from Leptothrix cholodnii (strain ATCC 51168 / LMG 8142 / SP-6) (Leptothrix discophora (strain SP-6)).